The chain runs to 126 residues: MAVPNELKYSKEHEWVKVEGNVATIGITEYAQSELGDIVFVELPETDDEINEGDTFGSVESVKTVSELYAPISGKVVEVNEELEDSPEFVNESPYEKAWMVKVEISDESQIEALLTAEKYSEMIGE.

The 83-residue stretch at 22–104 folds into the Lipoyl-binding domain; that stretch reads VATIGITEYA…YEKAWMVKVE (83 aa). Lys-63 bears the N6-lipoyllysine mark.

It belongs to the GcvH family. As to quaternary structure, the glycine cleavage system is composed of four proteins: P, T, L and H. (R)-lipoate serves as cofactor.

In terms of biological role, the glycine cleavage system catalyzes the degradation of glycine. The H protein shuttles the methylamine group of glycine from the P protein to the T protein. Functionally, is also involved in protein lipoylation via its role as an octanoyl/lipoyl carrier protein intermediate. The sequence is that of Glycine cleavage system H protein from Staphylococcus aureus (strain MSSA476).